The chain runs to 307 residues: Putative S-adenosyl-L-methionine-dependent methyltransferase MUL_4430 (307 aa).

Residues Asp128 and 157 to 158 (DL) each bind S-adenosyl-L-methionine.

The protein belongs to the UPF0677 family.

In terms of biological role, exhibits S-adenosyl-L-methionine-dependent methyltransferase activity. This Mycobacterium ulcerans (strain Agy99) protein is Putative S-adenosyl-L-methionine-dependent methyltransferase MUL_4430.